We begin with the raw amino-acid sequence, 186 residues long: ATP synthase subunit delta (186 aa).

It belongs to the ATPase delta chain family. As to quaternary structure, F-type ATPases have 2 components, F(1) - the catalytic core - and F(0) - the membrane proton channel. F(1) has five subunits: alpha(3), beta(3), gamma(1), delta(1), epsilon(1). F(0) has three main subunits: a(1), b(2) and c(10-14). The alpha and beta chains form an alternating ring which encloses part of the gamma chain. F(1) is attached to F(0) by a central stalk formed by the gamma and epsilon chains, while a peripheral stalk is formed by the delta and b chains.

Its subcellular location is the cell inner membrane. In terms of biological role, f(1)F(0) ATP synthase produces ATP from ADP in the presence of a proton or sodium gradient. F-type ATPases consist of two structural domains, F(1) containing the extramembraneous catalytic core and F(0) containing the membrane proton channel, linked together by a central stalk and a peripheral stalk. During catalysis, ATP synthesis in the catalytic domain of F(1) is coupled via a rotary mechanism of the central stalk subunits to proton translocation. Its function is as follows. This protein is part of the stalk that links CF(0) to CF(1). It either transmits conformational changes from CF(0) to CF(1) or is implicated in proton conduction. This is ATP synthase subunit delta from Brucella melitensis biotype 2 (strain ATCC 23457).